Consider the following 166-residue polypeptide: Urease accessory protein UreE 2 (166 aa).

The interval 135–154 is disordered; it reads EHGAYGGGHHHSRAGEEDFN.

Belongs to the UreE family.

Its subcellular location is the cytoplasm. Functionally, involved in urease metallocenter assembly. Binds nickel. Probably functions as a nickel donor during metallocenter assembly. The chain is Urease accessory protein UreE 2 from Pseudomonas syringae pv. syringae (strain B728a).